Reading from the N-terminus, the 396-residue chain is Multidrug efflux protein YfmO (396 aa).

The next 12 helical transmembrane spans lie at 20–40 (VWAV…VDPI), 56–76 (SLLF…SGAI), 80–100 (IGAK…AGLG), 114–134 (GGWG…IVGV), 142–162 (AIIL…LAGG), 171–191 (APFF…SFML), 214–234 (GLLT…ILLA), 249–269 (YVFF…APLV), 278–298 (SLVV…IWTD), 301–321 (TLII…NTIM), 339–359 (AYSS…GMLS), and 364–384 (ASTP…VLLM).

The protein belongs to the major facilitator superfamily.

The protein resides in the cell membrane. In terms of biological role, acts to efflux copper or a copper complex. It is possible that YfmO could contribute to copper resistance. This Bacillus subtilis (strain 168) protein is Multidrug efflux protein YfmO (yfmO).